A 100-amino-acid chain; its full sequence is U-myrmeciitoxin(01)-Mg7c (100 aa).

The signal sequence occupies residues 1–17 (MKLSYLSLALAIILVLA). Residues 18-50 (IVYSPHMEVKALADAEPDAIGFADAFGEADAEP) constitute a propeptide that is removed on maturation. Residue Ser85 is glycosylated (O-linked (GalNAc...) serine). O-linked (GalNAc...) threonine glycans are attached at residues Thr94 and Thr95.

The protein belongs to the formicidae venom precursor-01 superfamily. In terms of processing, glycosylation is critical to maintaining the aqueous solubility of this protein, but does not directly contribute to its activity. As to expression, expressed by the venom gland.

Its subcellular location is the secreted. The protein localises to the target cell membrane. Its function is as follows. Neurotoxin that triggers pain behavior and inflammation in mammals, and is paralytic and lethal to insects. Causes a time-dependent increase in cell leak current. May act by targeting membranes. This Myrmecia gulosa (Red bulldog ant) protein is U-myrmeciitoxin(01)-Mg7c.